A 637-amino-acid chain; its full sequence is Chaperone protein DnaK (637 aa).

Position 198 is a phosphothreonine; by autocatalysis (threonine 198). Residues 601 to 615 (AQQKAQAEQAGADAG) are compositionally biased toward low complexity. Residues 601-637 (AQQKAQAEQAGADAGEQPKQDDDVVDAEFEEVKEDKK) form a disordered region. The segment covering 623–637 (DVVDAEFEEVKEDKK) has biased composition (acidic residues).

It belongs to the heat shock protein 70 family.

Acts as a chaperone. The polypeptide is Chaperone protein DnaK (Vibrio atlanticus (strain LGP32) (Vibrio splendidus (strain Mel32))).